Consider the following 340-residue polypeptide: GTP 3',8-cyclase (340 aa).

Residues 20-246 (RFQRQYTYLR…PKAVNDGPAK (227 aa)) form the Radical SAM core domain. Residue Arg29 coordinates GTP. 2 residues coordinate [4Fe-4S] cluster: Cys36 and Cys40. Tyr42 contributes to the S-adenosyl-L-methionine binding site. Position 43 (Cys43) interacts with [4Fe-4S] cluster. Arg79 contributes to the GTP binding site. Gly83 provides a ligand contact to S-adenosyl-L-methionine. Thr110 is a GTP binding site. S-adenosyl-L-methionine is bound at residue Ser134. Lys171 is a binding site for GTP. Met205 serves as a coordination point for S-adenosyl-L-methionine. Residues Cys268 and Cys271 each contribute to the [4Fe-4S] cluster site. 273–275 (RLR) serves as a coordination point for GTP. Cys285 is a binding site for [4Fe-4S] cluster.

It belongs to the radical SAM superfamily. MoaA family. As to quaternary structure, monomer and homodimer. Requires [4Fe-4S] cluster as cofactor.

It carries out the reaction GTP + AH2 + S-adenosyl-L-methionine = (8S)-3',8-cyclo-7,8-dihydroguanosine 5'-triphosphate + 5'-deoxyadenosine + L-methionine + A + H(+). It functions in the pathway cofactor biosynthesis; molybdopterin biosynthesis. Functionally, catalyzes the cyclization of GTP to (8S)-3',8-cyclo-7,8-dihydroguanosine 5'-triphosphate. This is GTP 3',8-cyclase from Haemophilus ducreyi (strain 35000HP / ATCC 700724).